The following is a 408-amino-acid chain: MIPPEQPQQQLQPPSPAPPNHVVTTIENLPAEGSGGGGSLSASSRAGVRQRIRKVLNREMLISVALGQVLSLLICGIGLTSKYLSEDFHANTPVFQSFLNYILLFLVYTTTLAVRQGEENLLAILRRRWWKYMILGLIDLEANYLVVKAYQYTTLTSIQLLDCFVIPVVILLSWFFLLIRYKAVHFIGIVVCILGMGCMVGADVLVGRHQGAGENKLVGDLLVLGGATLYGISNVWEEYIIRTLSRVEFLGMIGLFGAFFSGIQLAIMEHKELLKVPWDWQIGLLYVGFSACMFGLYSFMPVVIKKTSATSVNLSLLTADLYSLFCGLFLFHYKFSGLYLLSFFTILIGLVLYSSTSTYIAQDPRVYKQFRNPSGPVVDLPTTAQVEPSVTYTSLGQETEEEPHVRVA.

The segment at 1 to 21 is disordered; it reads MIPPEQPQQQLQPPSPAPPNH. Helical transmembrane passes span 60–80, 94–114, 129–147, 158–178, 186–206, 221–241, 247–267, 284–304, 311–331, and 335–355; these read MLISVALGQVLSLLICGIGLT, VFQSFLNYILLFLVYTTTLAV, WWKYMILGLIDLEANYLVV, IQLLDCFVIPVVILLSWFFLL, FIGIVVCILGMGCMVGADVLV, LLVLGGATLYGISNVWEEYII, VEFLGMIGLFGAFFSGIQLAI, LLYVGFSACMFGLYSFMPVVI, SVNLSLLTADLYSLFCGLFLF, and FSGLYLLSFFTILIGLVLYSS.

The protein belongs to the SLC35F solute transporter family.

The protein localises to the cytoplasmic vesicle. The protein resides in the secretory vesicle. It localises to the synaptic vesicle membrane. Putative solute transporter. The polypeptide is Solute carrier family 35 member F1 (SLC35F1) (Homo sapiens (Human)).